We begin with the raw amino-acid sequence, 692 residues long: Threonine--tRNA ligase (692 aa).

Residues 1 to 20 (MSAPAQPAPGVDGGDPSQAR) are disordered. The TGS domain maps to 1 to 74 (MSAPAQPAPG…DVDTDITPVA (74 aa)). The interval 269–575 (DHRKLGVELD…LTEHYAGAFP (307 aa)) is catalytic. 3 residues coordinate Zn(2+): C374, H425, and H552.

The protein belongs to the class-II aminoacyl-tRNA synthetase family. In terms of assembly, homodimer. It depends on Zn(2+) as a cofactor.

Its subcellular location is the cytoplasm. The enzyme catalyses tRNA(Thr) + L-threonine + ATP = L-threonyl-tRNA(Thr) + AMP + diphosphate + H(+). Functionally, catalyzes the attachment of threonine to tRNA(Thr) in a two-step reaction: L-threonine is first activated by ATP to form Thr-AMP and then transferred to the acceptor end of tRNA(Thr). Also edits incorrectly charged L-seryl-tRNA(Thr). This is Threonine--tRNA ligase from Mycobacterium tuberculosis (strain CDC 1551 / Oshkosh).